We begin with the raw amino-acid sequence, 150 residues long: Transcriptional repressor NrdR (150 aa).

Positions 1–22 are disordered; it reads MKCPYCSAPDSRVVNSRPSDDG. A zinc finger lies at 3–34; the sequence is CPYCSAPDSRVVNSRPSDDGASIRRRRECLRC. The 88-residue stretch at 49-136 folds into the ATP-cone domain; sequence LMVLKRGGQR…VYRDFDSLER (88 aa).

It belongs to the NrdR family. Zn(2+) is required as a cofactor.

Functionally, negatively regulates transcription of bacterial ribonucleotide reductase nrd genes and operons by binding to NrdR-boxes. The sequence is that of Transcriptional repressor NrdR from Deinococcus geothermalis (strain DSM 11300 / CIP 105573 / AG-3a).